Here is a 226-residue protein sequence, read N- to C-terminus: Isoprenyl transferase (226 aa).

The active site involves D12. D12 serves as a coordination point for Mg(2+). Substrate-binding positions include 13–16, W17, K25, H29, and 57–59; these read GNAR and SSE. The active-site Proton acceptor is N60. Substrate-binding positions include W61, R63, R174, and 180 to 182; that span reads RIS. E193 provides a ligand contact to Mg(2+).

It belongs to the UPP synthase family. In terms of assembly, homodimer. It depends on Mg(2+) as a cofactor.

Functionally, catalyzes the condensation of isopentenyl diphosphate (IPP) with allylic pyrophosphates generating different type of terpenoids. The polypeptide is Isoprenyl transferase (Rickettsia typhi (strain ATCC VR-144 / Wilmington)).